Here is a 303-residue protein sequence, read N- to C-terminus: Glycine--tRNA ligase alpha subunit (303 aa).

It belongs to the class-II aminoacyl-tRNA synthetase family. Tetramer of two alpha and two beta subunits.

The protein resides in the cytoplasm. The enzyme catalyses tRNA(Gly) + glycine + ATP = glycyl-tRNA(Gly) + AMP + diphosphate. This chain is Glycine--tRNA ligase alpha subunit, found in Syntrophomonas wolfei subsp. wolfei (strain DSM 2245B / Goettingen).